Reading from the N-terminus, the 132-residue chain is Large ribosomal subunit protein bL17 (132 aa).

Belongs to the bacterial ribosomal protein bL17 family. In terms of assembly, part of the 50S ribosomal subunit. Contacts protein L32.

This is Large ribosomal subunit protein bL17 from Marinobacter nauticus (strain ATCC 700491 / DSM 11845 / VT8) (Marinobacter aquaeolei).